Here is a 305-residue protein sequence, read N- to C-terminus: GTPase Era (305 aa).

One can recognise an Era-type G domain in the interval 9-176; the sequence is KSGFISIIGR…LDTLPKYLPE (168 aa). The interval 17-24 is G1; that stretch reads GRPNVGKS. 17–24 is a GTP binding site; that stretch reads GRPNVGKS. Positions 43-47 are G2; it reads QTTRN. The G3 stretch occupies residues 64-67; it reads DTPG. GTP contacts are provided by residues 64–68 and 126–129; these read DTPGI and NKID. The interval 126-129 is G4; that stretch reads NKID. Positions 155–157 are G5; sequence ISA. The KH type-2 domain maps to 207–286; the sequence is TREEIPHSIA…YLELWVKVQK (80 aa).

This sequence belongs to the TRAFAC class TrmE-Era-EngA-EngB-Septin-like GTPase superfamily. Era GTPase family. Monomer.

Its subcellular location is the cytoplasm. It is found in the cell membrane. Its function is as follows. An essential GTPase that binds both GDP and GTP, with rapid nucleotide exchange. Plays a role in 16S rRNA processing and 30S ribosomal subunit biogenesis and possibly also in cell cycle regulation and energy metabolism. In Lysinibacillus sphaericus (strain C3-41), this protein is GTPase Era.